A 141-amino-acid chain; its full sequence is Large ribosomal subunit protein uL11 (141 aa).

Belongs to the universal ribosomal protein uL11 family. Part of the ribosomal stalk of the 50S ribosomal subunit. Interacts with L10 and the large rRNA to form the base of the stalk. L10 forms an elongated spine to which L12 dimers bind in a sequential fashion forming a multimeric L10(L12)X complex. In terms of processing, one or more lysine residues are methylated.

In terms of biological role, forms part of the ribosomal stalk which helps the ribosome interact with GTP-bound translation factors. This chain is Large ribosomal subunit protein uL11, found in Nautilia profundicola (strain ATCC BAA-1463 / DSM 18972 / AmH).